A 104-amino-acid chain; its full sequence is Large ribosomal subunit protein uL23 (104 aa).

Belongs to the universal ribosomal protein uL23 family. Part of the 50S ribosomal subunit. Contacts protein L29, and trigger factor when it is bound to the ribosome.

Its function is as follows. One of the early assembly proteins it binds 23S rRNA. One of the proteins that surrounds the polypeptide exit tunnel on the outside of the ribosome. Forms the main docking site for trigger factor binding to the ribosome. The chain is Large ribosomal subunit protein uL23 from Leptospira borgpetersenii serovar Hardjo-bovis (strain JB197).